We begin with the raw amino-acid sequence, 147 residues long: 3-dehydroquinate dehydratase (147 aa).

Tyr-23 serves as the catalytic Proton acceptor. Asn-75, His-81, and Asp-88 together coordinate substrate. Catalysis depends on His-101, which acts as the Proton donor. Substrate-binding positions include 102–103 (LS) and Arg-112.

The protein belongs to the type-II 3-dehydroquinase family. As to quaternary structure, homododecamer.

It catalyses the reaction 3-dehydroquinate = 3-dehydroshikimate + H2O. It functions in the pathway metabolic intermediate biosynthesis; chorismate biosynthesis; chorismate from D-erythrose 4-phosphate and phosphoenolpyruvate: step 3/7. Its function is as follows. Catalyzes a trans-dehydration via an enolate intermediate. The polypeptide is 3-dehydroquinate dehydratase (Hahella chejuensis (strain KCTC 2396)).